Consider the following 701-residue polypeptide: Glycine--tRNA ligase beta subunit (701 aa).

This sequence belongs to the class-II aminoacyl-tRNA synthetase family. Tetramer of two alpha and two beta subunits.

Its subcellular location is the cytoplasm. It carries out the reaction tRNA(Gly) + glycine + ATP = glycyl-tRNA(Gly) + AMP + diphosphate. In Helicobacter pylori (strain HPAG1), this protein is Glycine--tRNA ligase beta subunit.